The sequence spans 267 residues: 2-keto-3-deoxy-L-rhamnonate aldolase (267 aa).

Catalysis depends on histidine 49, which acts as the Proton acceptor. Glutamine 151 contacts substrate. Glutamate 153 provides a ligand contact to Mg(2+). Residues alanine 178 and aspartate 179 each contribute to the substrate site. Mg(2+) is bound at residue aspartate 179.

The protein belongs to the HpcH/HpaI aldolase family. KDR aldolase subfamily. As to quaternary structure, homohexamer. It depends on Mg(2+) as a cofactor.

The enzyme catalyses 2-dehydro-3-deoxy-L-rhamnonate = (S)-lactaldehyde + pyruvate. Functionally, catalyzes the reversible retro-aldol cleavage of 2-keto-3-deoxy-L-rhamnonate (KDR) to pyruvate and lactaldehyde. The protein is 2-keto-3-deoxy-L-rhamnonate aldolase of Salmonella typhi.